We begin with the raw amino-acid sequence, 765 residues long: Ubiquitin-like modifier-activating enzyme atg7 (765 aa).

Positions 436–441 match the GXGXXG motif motif; the sequence is GAGTLG. Cysteine 616 (glycyl thioester intermediate) is an active-site residue. 2 disordered regions span residues 646–670 and 744–765; these read AAPA…PPNH and AAND…PELL. The interval 721 to 760 is homodimerization; sequence ALTEKDYITELSGLAEVQRKAEAAANDVEWDSDEEGMEDE. The span at 748 to 765 shows a compositional bias: acidic residues; sequence VEWDSDEEGMEDEEPELL.

This sequence belongs to the ATG7 family. In terms of assembly, homodimer. Interacts with ATG8 through a thioester bond between Cys-616 and the C-terminal Gly of ATG8 and with ATG12 through a thioester bond between Cys-616 and the C-terminal Gly of ATG12. Also interacts with ATG3.

The protein resides in the cytoplasm. Its subcellular location is the preautophagosomal structure. Functionally, E1-like activating enzyme involved in the 2 ubiquitin-like systems required for cytoplasm to vacuole transport (Cvt) and autophagy. Activates ATG12 for its conjugation with ATG5 and ATG8 for its conjugation with phosphatidylethanolamine. Both systems are needed for the ATG8 association to Cvt vesicles and autophagosomes membranes. Autophagy is essential for maintenance of amino acid levels and protein synthesis under nitrogen starvation. Required for selective autophagic degradation of the nucleus (nucleophagy) as well as for mitophagy which contributes to regulate mitochondrial quantity and quality by eliminating the mitochondria to a basal level to fulfill cellular energy requirements and preventing excess ROS production. Required for normal mycelial growth and conidiogenesis, and regulates sclerotial formation. Plays an essential role in pathogenesis. The protein is Ubiquitin-like modifier-activating enzyme atg7 of Botryotinia fuckeliana (strain BcDW1) (Noble rot fungus).